The sequence spans 277 residues: Small ribosomal subunit protein uS2 (277 aa).

Positions 228-241 are enriched in basic and acidic residues; that stretch reads YEERLQAETDKDAE. The tract at residues 228–277 is disordered; that stretch reads YEERLQAETDKDAESSTVQQEENPEADIPESIETKESVSAAADSDLDENE.

It belongs to the universal ribosomal protein uS2 family.

This Syntrophus aciditrophicus (strain SB) protein is Small ribosomal subunit protein uS2.